A 180-amino-acid chain; its full sequence is Small ribosomal subunit protein bS21c (180 aa).

The N-terminal 79 residues, 1–79 (MASTSSLLNF…PSLAFSNTLY (79 aa)), are a transit peptide targeting the chloroplast. The segment covering 14 to 45 (LFPSNTSLPPSSNPKFPNPNSLSSQQNSISIS) has biased composition (low complexity). Disordered stretches follow at residues 14 to 49 (LFPS…SKKH) and 124 to 180 (NKQE…GAPF). Over residues 130–147 (KRKHREAAKRNSRRRRGP) the composition is skewed to basic residues. Residues 154–166 (GKEEATKVDKKED) are compositionally biased toward basic and acidic residues.

As to quaternary structure, component of the chloroplast small ribosomal subunit (SSU). Mature 70S chloroplast ribosomes of higher plants consist of a small (30S) and a large (50S) subunit. The 30S small subunit contains 1 molecule of ribosomal RNA (16S rRNA) and 24 different proteins. The 50S large subunit contains 3 rRNA molecules (23S, 5S and 4.5S rRNA) and 33 different proteins. bS21c binds directly to 16S ribosomal RNA.

The protein resides in the plastid. Its subcellular location is the chloroplast. In terms of biological role, component of the chloroplast ribosome (chloro-ribosome), a dedicated translation machinery responsible for the synthesis of chloroplast genome-encoded proteins, including proteins of the transcription and translation machinery and components of the photosynthetic apparatus. This Spinacia oleracea (Spinach) protein is Small ribosomal subunit protein bS21c (rps21).